We begin with the raw amino-acid sequence, 457 residues long: Cyanidin 3-O-galactoside 2''-O-xylosyltransferase FGGT1 (457 aa).

Belongs to the UDP-glycosyltransferase family. Expressed in ovaries.

It carries out the reaction cyanidin 3-O-beta-D-galactoside + UDP-alpha-D-xylose = cyanidin 3-O-[beta-D-xylosyl-(1-&gt;2)-beta-D-galactoside] + UDP + H(+). The protein operates within pigment biosynthesis; anthocyanin biosynthesis. Its function is as follows. Xylosyltransferase involved in anthocyanin biosynthesis by catalyzing the xylosylation of cyanidin 3-O-galactoside to form cyanidin 3-O-[2-O-(-xylosyl)-galactoside]. Required for the accumulation of anthocyanin in red-fleshed kiwifruit varieties. The polypeptide is Cyanidin 3-O-galactoside 2''-O-xylosyltransferase FGGT1 (Actinidia chinensis var. chinensis (Chinese soft-hair kiwi)).